A 230-amino-acid polypeptide reads, in one-letter code: Ureidoacrylate amidohydrolase RutB (230 aa).

Residue D24 is the Proton acceptor of the active site. K133 is a catalytic residue. Residue C166 is the Nucleophile of the active site.

Belongs to the isochorismatase family. RutB subfamily.

The enzyme catalyses (Z)-3-ureidoacrylate + H2O + H(+) = (Z)-3-aminoacrylate + NH4(+) + CO2. It catalyses the reaction (Z)-3-ureidoacrylate + H2O = (Z)-3-aminoacrylate + carbamate + H(+). The catalysed reaction is (Z)-2-methylureidoacrylate + H2O + H(+) = (Z)-2-methylaminoacrylate + NH4(+) + CO2. Its function is as follows. Hydrolyzes ureidoacrylate to form aminoacrylate and carbamate. The carbamate hydrolyzes spontaneously, thereby releasing one of the nitrogen atoms of the pyrimidine ring as ammonia and one of its carbon atoms as CO2. This Escherichia coli O157:H7 protein is Ureidoacrylate amidohydrolase RutB.